The primary structure comprises 157 residues: Protein Smg homolog (157 aa).

Belongs to the Smg family.

This chain is Protein Smg homolog, found in Aeromonas hydrophila subsp. hydrophila (strain ATCC 7966 / DSM 30187 / BCRC 13018 / CCUG 14551 / JCM 1027 / KCTC 2358 / NCIMB 9240 / NCTC 8049).